Here is a 254-residue protein sequence, read N- to C-terminus: PF03932 family protein CutC (254 aa).

It belongs to the CutC family.

It is found in the cytoplasm. This chain is PF03932 family protein CutC, found in Yersinia pseudotuberculosis serotype O:1b (strain IP 31758).